Consider the following 349-residue polypeptide: Probable protease SohB (349 aa).

Over 1–8 the chain is Periplasmic; that stretch reads MELLSEYG. Residues 9–29 traverse the membrane as a helical segment; that stretch reads LFLAKIVTVVLAIAAIAAIIV. At 30-349 the chain is on the cytoplasmic side; it reads NVAQRNKRQR…WWQRGQKPLM (320 aa). S178 acts as the Nucleophile in catalysis. Catalysis depends on K230, which acts as the Proton donor/acceptor.

Belongs to the peptidase S49 family.

It is found in the cell inner membrane. Multicopy suppressor of the HtrA (DegP) null phenotype. It is possibly a protease, not essential for bacterial viability. This Escherichia coli (strain K12) protein is Probable protease SohB (sohB).